A 438-amino-acid chain; its full sequence is Na(+)/H(+) antiporter NhaA 2 (438 aa).

Helical transmembrane passes span 21–41 (SGGI…NSPW), 66–86 (LHHW…GLEL), 102–122 (MLPI…FHFI), 130–150 (KGWG…LALL), 160–180 (IFLT…IALF), 183–203 (GELA…LIAG), 206–226 (LGVQ…VVLL), 308–328 (WVIF…VLQL), 341–361 (LGVA…FSWI), 376–396 (WMDV…SLFI), and 410–430 (AKLG…TVLS).

The protein belongs to the NhaA Na(+)/H(+) (TC 2.A.33) antiporter family.

The protein localises to the cell inner membrane. The catalysed reaction is Na(+)(in) + 2 H(+)(out) = Na(+)(out) + 2 H(+)(in). Functionally, na(+)/H(+) antiporter that extrudes sodium in exchange for external protons. The chain is Na(+)/H(+) antiporter NhaA 2 from Syntrophotalea carbinolica (strain DSM 2380 / NBRC 103641 / GraBd1) (Pelobacter carbinolicus).